An 800-amino-acid chain; its full sequence is DNA topoisomerase 4 subunit A (800 aa).

Residues 31–495 enclose the Topo IIA-type catalytic domain; that stretch reads LPDVRDGLKP…EIEEIKIDKE (465 aa). Tyr-119 (O-(5'-phospho-DNA)-tyrosine intermediate) is an active-site residue.

Belongs to the type II topoisomerase GyrA/ParC subunit family. ParC type 2 subfamily. In terms of assembly, heterotetramer composed of ParC and ParE.

Its subcellular location is the cell membrane. The catalysed reaction is ATP-dependent breakage, passage and rejoining of double-stranded DNA.. Functionally, topoisomerase IV is essential for chromosome segregation. It relaxes supercoiled DNA. Performs the decatenation events required during the replication of a circular DNA molecule. The chain is DNA topoisomerase 4 subunit A from Staphylococcus aureus (strain N315).